Consider the following 214-residue polypeptide: Probable transaldolase (214 aa).

Lys83 serves as the catalytic Schiff-base intermediate with substrate.

This sequence belongs to the transaldolase family. Type 3B subfamily.

It localises to the cytoplasm. The catalysed reaction is D-sedoheptulose 7-phosphate + D-glyceraldehyde 3-phosphate = D-erythrose 4-phosphate + beta-D-fructose 6-phosphate. Its pathway is carbohydrate degradation; pentose phosphate pathway; D-glyceraldehyde 3-phosphate and beta-D-fructose 6-phosphate from D-ribose 5-phosphate and D-xylulose 5-phosphate (non-oxidative stage): step 2/3. In terms of biological role, transaldolase is important for the balance of metabolites in the pentose-phosphate pathway. This chain is Probable transaldolase, found in Desulfosudis oleivorans (strain DSM 6200 / JCM 39069 / Hxd3) (Desulfococcus oleovorans).